A 781-amino-acid chain; its full sequence is Putative amine oxidase [copper-containing] (781 aa).

Positions 1–34 are cleaved as a signal peptide; that stretch reads MSLPKTANGMDKLKLCYLLLFYLGSSSLTEVSGA. The cysteines at positions 199 and 203 are disulfide-linked. 385–395 lines the substrate pocket; the sequence is FFDSSYMIGMN. The active-site Proton acceptor is the aspartate 387. A disulfide bridge connects residues cysteine 405 and cysteine 432. 472-477 serves as a coordination point for substrate; sequence IANYDY. Tyrosine 475 serves as the catalytic Schiff-base intermediate with substrate; via topaquinone. The residue at position 475 (tyrosine 475) is a 2',4',5'-topaquinone. Histidine 525 and histidine 527 together coordinate Cu cation. The Ca(2+) site is built by aspartate 534, aspartate 536, glutamate 579, phenylalanine 671, aspartate 674, glutamate 676, aspartate 682, and leucine 683. Positions 534 and 536 each coordinate Mn(2+). Aspartate 682 is a binding site for Mn(2+). Cu cation is bound at residue histidine 693.

This sequence belongs to the copper/topaquinone oxidase family. Homodimer. Requires Cu cation as cofactor. Ca(2+) is required as a cofactor. L-topaquinone serves as cofactor. The cofactor is Mn(2+). In terms of processing, topaquinone (TPQ) is generated by copper-dependent autoxidation of a specific tyrosyl residue. In terms of tissue distribution, prismatic layer of shell (at protein level). Expressed primarily in the mantle with highest level in the mantle edge and lower level in the mantle pallium.

The protein localises to the secreted. This chain is Putative amine oxidase [copper-containing], found in Margaritifera margaritifera (Freshwater pearl mussel).